Consider the following 193-residue polypeptide: Xanthine phosphoribosyltransferase (193 aa).

Residues Leu-20 and Thr-27 each contribute to the xanthine site. 128 to 132 (ANGQA) lines the 5-phospho-alpha-D-ribose 1-diphosphate pocket. Lys-156 provides a ligand contact to xanthine.

Belongs to the purine/pyrimidine phosphoribosyltransferase family. Xpt subfamily. As to quaternary structure, homodimer.

Its subcellular location is the cytoplasm. The enzyme catalyses XMP + diphosphate = xanthine + 5-phospho-alpha-D-ribose 1-diphosphate. It functions in the pathway purine metabolism; XMP biosynthesis via salvage pathway; XMP from xanthine: step 1/1. In terms of biological role, converts the preformed base xanthine, a product of nucleic acid breakdown, to xanthosine 5'-monophosphate (XMP), so it can be reused for RNA or DNA synthesis. The chain is Xanthine phosphoribosyltransferase from Streptococcus uberis (strain ATCC BAA-854 / 0140J).